Reading from the N-terminus, the 193-residue chain is DNA damage-inducible transcript 4-like protein (193 aa).

Belongs to the DDIT4 family.

The protein resides in the cytoplasm. Its function is as follows. Inhibits cell growth by regulating the TOR signaling pathway upstream of the TSC1-TSC2 complex and downstream of AKT1. This is DNA damage-inducible transcript 4-like protein (DDIT4L) from Bos taurus (Bovine).